The chain runs to 501 residues: Vitamin D 25-hydroxylase (501 aa).

The N-terminal stretch at M1–G26 is a signal peptide. A250 contributes to the substrate binding site. C448 provides a ligand contact to heme.

Belongs to the cytochrome P450 family. As to quaternary structure, homodimer. The cofactor is heme.

It is found in the endoplasmic reticulum membrane. Its subcellular location is the microsome membrane. The catalysed reaction is calciol + reduced [NADPH--hemoprotein reductase] + O2 = calcidiol + oxidized [NADPH--hemoprotein reductase] + H2O + H(+). It carries out the reaction vitamin D2 + reduced [NADPH--hemoprotein reductase] + O2 = 25-hydroxyvitamin D2 + oxidized [NADPH--hemoprotein reductase] + H2O + H(+). The enzyme catalyses 1alpha-hydroxyvitamin D2 + reduced [NADPH--hemoprotein reductase] + O2 = 1alpha,25-dihydroxyvitamin D2 + oxidized [NADPH--hemoprotein reductase] + H2O + H(+). It catalyses the reaction alfacalcidol + reduced [NADPH--hemoprotein reductase] + O2 = calcitriol + oxidized [NADPH--hemoprotein reductase] + H2O + H(+). It participates in hormone biosynthesis; vitamin D biosynthesis. Functionally, a cytochrome P450 monooxygenase involved in activation of vitamin D precursors. Catalyzes hydroxylation at C-25 of both forms of vitamin D, vitamin D(2) and D(3) (calciol). Can metabolize vitamin D analogs/prodrugs 1alpha-hydroxyvitamin D(2) (doxercalciferol) and 1alpha-hydroxyvitamin D(3) (alfacalcidol) forming 25-hydroxy derivatives. Mechanistically, uses molecular oxygen inserting one oxygen atom into a substrate, and reducing the second into a water molecule, with two electrons provided by NADPH via cytochrome P450 reductase (CPR; NADPH-ferrihemoprotein reductase). This is Vitamin D 25-hydroxylase (CYP2R1) from Homo sapiens (Human).